Consider the following 715-residue polypeptide: Fatty acid oxidation complex subunit alpha (715 aa).

An enoyl-CoA hydratase/isomerase region spans residues 1–190 (MIYEGKAITV…KVGAVDAVVA (190 aa)). Residue D297 coordinates substrate. The tract at residues 312 to 715 (HDVKQAAVLG…MAKNGQRFFN (404 aa)) is 3-hydroxyacyl-CoA dehydrogenase. NAD(+) contacts are provided by residues M325, D344, 401 to 403 (VVE), K408, and S430. The active-site For 3-hydroxyacyl-CoA dehydrogenase activity is the H451. N454 contributes to the NAD(+) binding site. 2 residues coordinate substrate: N501 and Y660.

This sequence in the N-terminal section; belongs to the enoyl-CoA hydratase/isomerase family. It in the C-terminal section; belongs to the 3-hydroxyacyl-CoA dehydrogenase family. Heterotetramer of two alpha chains (FadB) and two beta chains (FadA).

It carries out the reaction a (3S)-3-hydroxyacyl-CoA + NAD(+) = a 3-oxoacyl-CoA + NADH + H(+). It catalyses the reaction a (3S)-3-hydroxyacyl-CoA = a (2E)-enoyl-CoA + H2O. The enzyme catalyses a 4-saturated-(3S)-3-hydroxyacyl-CoA = a (3E)-enoyl-CoA + H2O. The catalysed reaction is (3S)-3-hydroxybutanoyl-CoA = (3R)-3-hydroxybutanoyl-CoA. It carries out the reaction a (3Z)-enoyl-CoA = a 4-saturated (2E)-enoyl-CoA. It catalyses the reaction a (3E)-enoyl-CoA = a 4-saturated (2E)-enoyl-CoA. Its pathway is lipid metabolism; fatty acid beta-oxidation. Functionally, involved in the aerobic and anaerobic degradation of long-chain fatty acids via beta-oxidation cycle. Catalyzes the formation of 3-oxoacyl-CoA from enoyl-CoA via L-3-hydroxyacyl-CoA. It can also use D-3-hydroxyacyl-CoA and cis-3-enoyl-CoA as substrate. The polypeptide is Fatty acid oxidation complex subunit alpha (Pseudomonas putida (strain ATCC 47054 / DSM 6125 / CFBP 8728 / NCIMB 11950 / KT2440)).